The chain runs to 247 residues: Histone acetyltransferase MCC1 (247 aa).

The 174-residue stretch at 25-198 (IHYRPINPND…DAFLFVYFIN (174 aa)) folds into the N-acetyltransferase domain.

It belongs to the acetyltransferase family.

The catalysed reaction is L-lysyl-[protein] + acetyl-CoA = N(6)-acetyl-L-lysyl-[protein] + CoA + H(+). In terms of biological role, histone acetyltransferase that probably regulates acetylation status of histone H3 during meiosis. Histone acetylation may influence recombination and chromosome segregation. This Arabidopsis thaliana (Mouse-ear cress) protein is Histone acetyltransferase MCC1 (MCC1).